A 718-amino-acid polypeptide reads, in one-letter code: MLNSTGELEFSNEEDPEIISQLTSLPLSGGKSSAGVPEKTGYPDSVYVMAANIFQGIRIEKSAQKVLIKYGNEPLRSLSESEDQSFQRLSYELAFSALKYQDILETILIDSCIFPSTTIPDHLSSLIIVMLYDFQDRKFQTRVLSDNEEPISEVQEVENLLNSFKIKLAAALARCRIKHDALSIYHILPETVRKQELRASTLPLYAWINTCKISPEEVYNNLKRRGYNKVKSVLHIDDKVFAVDQHCYDVLIFPSHLKNDLINIDLFKDYKLIFQDKSRSLAVHSVKALLNMDDDVLMVNTGSWYTVSHMSILTNNNTSKVFVCGVQSQAKDPDLKTLFTKIGCKNIEILHEKFINIESKDHRLQKVKVILLLPRCSGLGVSNPVEFILNEHEDTEFLKDHSQGGISVDKLHVLAQQQYEQLTHAMKFTKAQAVVYCTCSVFPEENEAVVKKALEFQDLGNKGQPYRLSPPVLPLCSLKEIQLSTDKFFRMEPSEITNGCFLSILTRERDPSETVSVNDVLARAAAKGLLDGIELGKSSKREKKKKKSKTSLTKGATTDNGIQMKIAEFLNRETKASANLSETVTKPPLPQKNTAQVGASSQTRKPNKLAPHPAVPAFVKNTCPSRPRERQTHFLRPRPEDRMVALKPIKIVLPPVFMPFSSPQGIRSRMPTQHLYCRWVAPKALVPTCLPTHSLSRKEEKPKDDTPSSLLRPPRRWL.

Residue Cys439 is the Nucleophile of the active site. Disordered stretches follow at residues Gly536–Thr557, Ala578–Pro616, and Ser694–Leu718. Positions Ser538–Lys549 are enriched in basic residues. The segment covering Gln591–Arg604 has biased composition (polar residues). Residues Ser696–Thr706 show a composition bias toward basic and acidic residues.

It belongs to the class I-like SAM-binding methyltransferase superfamily. RsmB/NOP family.

May have S-adenosyl-L-methionine-dependent methyl-transferase activity. This is Putative methyltransferase NSUN7 (NSUN7) from Homo sapiens (Human).